An 889-amino-acid chain; its full sequence is Extended synaptotagmin-3 (889 aa).

A disordered region spans residues 1 to 65 (MAQGDPGGQT…GPRDPGQGGA (65 aa)). Residues 1-66 (MAQGDPGGQT…PRDPGQGGAG (66 aa)) lie on the Cytoplasmic side of the membrane. Basic and acidic residues-rich tracts occupy residues 17–28 (TDKKPDEPKATE) and 41–58 (PGGEKGLRDPPGGEKGPR). Transmembrane regions (helical) follow at residues 67–91 (EALAEALYGLGRPVLRAVLYLFPVY) and 92–112 (LCGRFGLSPTWLLFGLFLWMF). Topologically, residues 113–889 (WTRNKKFKLA…ELTPTGLPTS (777 aa)) are cytoplasmic. Positions 155-333 (DVERVEWLNK…LPNRFTVPLS (179 aa)) constitute an SMP-LTD domain. C2 domains are found at residues 331–452 (PLSS…DEWF) and 468–618 (WLSL…STIK). Residues Lys363, Asp364, Asp376, Asp423, Glu424, Asp425, Asp427, Asp429, and Asp430 each contribute to the Ca(2+) site. A disordered region spans residues 649-724 (SIKRAQSQQH…GAVPESHTPS (76 aa)). A compositionally biased stretch (basic residues) spans 658–671 (HKSHGKSHQAHHQA). 2 stretches are compositionally biased toward low complexity: residues 672 to 682 (HQTQQNHTVQQ) and 691 to 714 (ISTTSQQANTSSSNPAPNQNPNST). Residues 757 to 879 (MTGEVEVSVR…DLVKGFTKWF (123 aa)) enclose the C2 3 domain. The tract at residues 804–811 (RKWSGRKK) is required for phosphatidylinositol 4,5-bisphosphate-dependent location at the cell membrane.

It belongs to the extended synaptotagmin family.

The protein resides in the cell membrane. Its subcellular location is the endoplasmic reticulum membrane. Tethers the endoplasmic reticulum to the cell membrane and promotes the formation of appositions between the endoplasmic reticulum and the cell membrane. Binds glycerophospholipids in a barrel-like domain and may play a role in cellular lipid transport. The protein is Extended synaptotagmin-3 (esyt3) of Xenopus tropicalis (Western clawed frog).